Here is a 138-residue protein sequence, read N- to C-terminus: UPF0047 protein YjbQ (138 aa).

Belongs to the UPF0047 family.

In Escherichia coli O157:H7, this protein is UPF0047 protein YjbQ (yjbQ).